Here is a 734-residue protein sequence, read N- to C-terminus: Elongation factor G, mitochondrial (734 aa).

A mitochondrion-targeting transit peptide spans methionine 1–phenylalanine 32. The tr-type G domain occupies serine 38–asparagine 318. GTP-binding positions include alanine 47–threonine 54, aspartate 114–histidine 118, and asparagine 168–aspartate 171.

It belongs to the TRAFAC class translation factor GTPase superfamily. Classic translation factor GTPase family. EF-G/EF-2 subfamily.

It is found in the mitochondrion. It carries out the reaction GTP + H2O = GDP + phosphate + H(+). The protein operates within protein biosynthesis; polypeptide chain elongation. In terms of biological role, mitochondrial GTPase that catalyzes the GTP-dependent ribosomal translocation step during translation elongation. During this step, the ribosome changes from the pre-translocational (PRE) to the post-translocational (POST) state as the newly formed A-site-bound peptidyl-tRNA and P-site-bound deacylated tRNA move to the P and E sites, respectively. Catalyzes the coordinated movement of the two tRNA molecules, the mRNA and conformational changes in the ribosome. The polypeptide is Elongation factor G, mitochondrial (gfm1) (Dictyostelium discoideum (Social amoeba)).